A 293-amino-acid polypeptide reads, in one-letter code: AKT-interacting protein homolog A (293 aa).

Residues 1–11 (MNPFWNMSSAS) show a composition bias toward polar residues. Residues 1–45 (MNPFWNMSSASVRKRSENDEKISTGDQKISPPRSSSAKKQLPPIP) form a disordered region. Over residues 14-23 (KRSENDEKIS) the composition is skewed to basic and acidic residues. The span at 24–38 (TGDQKISPPRSSSAK) shows a compositional bias: polar residues. The 149-residue stretch at 75-223 (YLEYSLLAEF…VVDSVKLCNS (149 aa)) folds into the UBC core domain. The segment covering 256-266 (AQKKKSEEQSK) has biased composition (basic and acidic residues). A disordered region spans residues 256-293 (AQKKKSEEQSKGLHVSGLSWVKPGSVLPFSKEENSLQT).

This sequence belongs to the ubiquitin-conjugating enzyme family. FTS subfamily.

Its subcellular location is the cytoplasm. It is found in the cell membrane. Its function is as follows. May function to promote vesicle trafficking and/or fusion. May also regulate apoptosis. The polypeptide is AKT-interacting protein homolog A (aktip-a) (Xenopus laevis (African clawed frog)).